The chain runs to 144 residues: Putative RNase YutE (144 aa).

The active site involves R96. The RX(4)HXY motif motif lies at 96–103; that stretch reads RKTLVQQY.

It belongs to the HepT RNase toxin family. Homodimer, probably forms a complex with cognate antitoxin YutD.

Its function is as follows. Probable toxic component of a putative type VII toxin-antitoxin (TA) system, probably an RNase. Probably neutralized by cognate antitoxin YutD. In Bacillus subtilis (strain 168), this protein is Putative RNase YutE (yutE).